A 146-amino-acid polypeptide reads, in one-letter code: Large ribosomal subunit protein uL15 (146 aa).

The segment at 1–58 (MNLSNLRAPKKANRNRKRVGRGMGSGHGKTSTRGHKGQRSRSGSRSMRGFEGGQMPLH) is disordered. Composition is skewed to basic residues over residues 8 to 20 (APKK…KRVG) and 30 to 39 (TSTRGHKGQR). Residues 40 to 49 (SRSGSRSMRG) are compositionally biased toward low complexity.

This sequence belongs to the universal ribosomal protein uL15 family. Part of the 50S ribosomal subunit.

In terms of biological role, binds to the 23S rRNA. This Acidobacterium capsulatum (strain ATCC 51196 / DSM 11244 / BCRC 80197 / JCM 7670 / NBRC 15755 / NCIMB 13165 / 161) protein is Large ribosomal subunit protein uL15.